Here is a 318-residue protein sequence, read N- to C-terminus: UDP-N-acetylenolpyruvoylglucosamine reductase (318 aa).

An FAD-binding PCMH-type domain is found at 39–202 (VGGPADLLVR…TRVQLTLRPG (164 aa)). Arg182 is a catalytic residue. Positions 214–223 (DRDGRRRTQP) are enriched in basic and acidic residues. The interval 214–235 (DRDGRRRTQPLDRPTFGSTFTN) is disordered. The active-site Proton donor is Ser231. Glu301 is a catalytic residue.

Belongs to the MurB family. FAD is required as a cofactor.

The protein localises to the cytoplasm. The catalysed reaction is UDP-N-acetyl-alpha-D-muramate + NADP(+) = UDP-N-acetyl-3-O-(1-carboxyvinyl)-alpha-D-glucosamine + NADPH + H(+). It participates in cell wall biogenesis; peptidoglycan biosynthesis. Its function is as follows. Cell wall formation. This Anaeromyxobacter sp. (strain Fw109-5) protein is UDP-N-acetylenolpyruvoylglucosamine reductase.